The sequence spans 184 residues: ATP synthase subunit b, chloroplastic (184 aa).

Residues 27–49 traverse the membrane as a helical segment; it reads LATNLINLSVVLGVLIFFGKGVL.

It belongs to the ATPase B chain family. As to quaternary structure, F-type ATPases have 2 components, F(1) - the catalytic core - and F(0) - the membrane proton channel. F(1) has five subunits: alpha(3), beta(3), gamma(1), delta(1), epsilon(1). F(0) has four main subunits: a(1), b(1), b'(1) and c(10-14). The alpha and beta chains form an alternating ring which encloses part of the gamma chain. F(1) is attached to F(0) by a central stalk formed by the gamma and epsilon chains, while a peripheral stalk is formed by the delta, b and b' chains.

The protein localises to the plastid. It localises to the chloroplast thylakoid membrane. Its function is as follows. F(1)F(0) ATP synthase produces ATP from ADP in the presence of a proton or sodium gradient. F-type ATPases consist of two structural domains, F(1) containing the extramembraneous catalytic core and F(0) containing the membrane proton channel, linked together by a central stalk and a peripheral stalk. During catalysis, ATP synthesis in the catalytic domain of F(1) is coupled via a rotary mechanism of the central stalk subunits to proton translocation. Component of the F(0) channel, it forms part of the peripheral stalk, linking F(1) to F(0). The polypeptide is ATP synthase subunit b, chloroplastic (Liriodendron tulipifera (Tuliptree)).